Consider the following 305-residue polypeptide: Coiled-coil domain-containing protein 69-A (305 aa).

The N-myristoyl glycine moiety is linked to residue G2. Positions 13-38 (LRKKKRQKAHQGGLTSQELNDLNAKT) are disordered. Residues 25–38 (GLTSQELNDLNAKT) are compositionally biased toward polar residues. Residues 42 to 281 (NEVLQKIKEY…QREKEQNLYR (240 aa)) adopt a coiled-coil conformation.

It belongs to the CCDC69 family.

It localises to the cytoplasm. Its subcellular location is the cytoskeleton. It is found in the spindle. The protein resides in the midbody. In terms of biological role, may act as a scaffold to regulate the recruitment and assembly of spindle midzone components. This is Coiled-coil domain-containing protein 69-A (ccdc69-a) from Xenopus laevis (African clawed frog).